The primary structure comprises 556 residues: MNQENASCPKKHFFGPASSRITVKGTIYPIEVGMRRVALTRSYECKGERFDAMPLYDTSGPFGDAEREHDVRKGLEPVRDRWGFDRGTVESVGGELSMTGRKPRVAKAGEAVTQMHFARKGIVTPEMEYVAIRENQALEAWIEKCGGKPVTPEMVRSEVARGRAIIPANINHPEIEPMIIGRNFRVKINANIGNSALGSSIDEEVEKAVWSCRWGADTVMDLSTGKNIHQTREWILRNSPVPIGTVPLYQALEKVGGKAEELSWEVYRDTLVEQAEQGVDYFTIHSGILAATLPDAEARQTGIVSRGGSIMARWCRAHKQENFLFTRFDDICDILRSYDVAISLGDALRPGSIGDANDAAQFGELKTLGELTLRAWKRDVQVMIEGPGHVPLHMIRENMEMQLKHCHEAPFYTLGPLVTDVAAGYDHVNSAIGGTLIASLGCSMLCYVTPKEHLGLPNRDDVREGVIVHRVAAHAADIAKGSATAWLRDELMSKARYAFAWEDQFSLALDPLKTRQIHAQNIAATGDTSATAKYCTMCGPDFCSMKRSQETTAAGL.

Residues N191, M220, Y249, H285, S305 to G307, D346 to R349, and E385 contribute to the substrate site. Residue H389 coordinates Zn(2+). Y412 lines the substrate pocket. Residue H453 participates in Zn(2+) binding. C535, C538, and C543 together coordinate [4Fe-4S] cluster.

Belongs to the ThiC family. [4Fe-4S] cluster is required as a cofactor.

The enzyme catalyses 5-amino-1-(5-phospho-beta-D-ribosyl)imidazole + S-adenosyl-L-methionine = 4-amino-2-methyl-5-(phosphooxymethyl)pyrimidine + CO + 5'-deoxyadenosine + formate + L-methionine + 3 H(+). It participates in cofactor biosynthesis; thiamine diphosphate biosynthesis. In terms of biological role, catalyzes the synthesis of the hydroxymethylpyrimidine phosphate (HMP-P) moiety of thiamine from aminoimidazole ribotide (AIR) in a radical S-adenosyl-L-methionine (SAM)-dependent reaction. This Chlorobaculum tepidum (strain ATCC 49652 / DSM 12025 / NBRC 103806 / TLS) (Chlorobium tepidum) protein is Phosphomethylpyrimidine synthase.